Consider the following 582-residue polypeptide: Probable inorganic phosphate transporter 1-9 (582 aa).

At 1 to 23 the chain is on the cytoplasmic side; that stretch reads MAPRIRVLAALDQARTQYYHFKA. The helical transmembrane segment at 24–44 threads the bilayer; sequence IVIAGMGLFTDSYDLFCISPV. Residues 45-75 are Extracellular-facing; the sequence is MKIFGRVYYAPSGSVDGSGSGPGVTPPAVVS. Residues 76–96 form a helical membrane-spanning segment; sequence ATVGVALLGAVAGNVVFGALG. Topologically, residues 97–103 are cytoplasmic; the sequence is DRVGRRR. The chain crosses the membrane as a helical span at residues 104-124; that stretch reads VYGACLLLMVCSSVGSGLSVC. The Extracellular segment spans residues 125–130; sequence RTRRCA. A helical membrane pass occupies residues 131–151; sequence LASLCFFRFLLGVGVGGDYPL. At 152–165 the chain is on the cytoplasmic side; that stretch reads SATIMSEFANRRTR. The chain crosses the membrane as a helical span at residues 166–186; sequence GAFIAAVFSMQGFGILVSSAV. Topologically, residues 187 to 210 are extracellular; that stretch reads TMAVAAAFDHYTGYPAPLDTPECA. The chain crosses the membrane as a helical span at residues 211 to 231; sequence DLAWRIILMAGAVPAALTYYW. The Cytoplasmic segment spans residues 232–307; it reads RMSMPETARY…RRFVRQHGRD (76 aa). A helical transmembrane segment spans residues 308 to 328; it reads LFACAAAWFLLDIPYYSSTLF. Topologically, residues 329–354 are extracellular; the sequence is QSQIYRPWFPPAAKVNAFQEAFNVAK. A helical membrane pass occupies residues 355–375; that stretch reads FQAVIAVASTIPGYFAAMLLI. The Cytoplasmic portion of the chain corresponds to 376–385; sequence ERAGRRRLQM. A helical membrane pass occupies residues 386 to 406; it reads AGFLLMAVFLFALAGPYDGYW. Residues 407–415 lie on the Extracellular side of the membrane; it reads RDHAKTAGY. Residues 416–436 traverse the membrane as a helical segment; it reads IVLYSLTFFSANLGPNTTTFI. The Cytoplasmic portion of the chain corresponds to 437-451; it reads LPAELFPARFRSTCH. Residues 452-472 form a helical membrane-spanning segment; the sequence is GLSGAAGKLGALVGSIGFLWA. At 473-485 the chain is on the extracellular side; sequence SQQKDGAAAGHLP. Residues 486-506 traverse the membrane as a helical segment; that stretch reads GIGMMYALFVLGGICLLGLAL. The Cytoplasmic portion of the chain corresponds to 507–582; that stretch reads TYAFTPETMT…SPILPHRMSL (76 aa). The tract at residues 519–541 is disordered; that stretch reads LEENESSVQAQSQVGDGGSDAGN.

Belongs to the major facilitator superfamily. Phosphate:H(+) symporter (TC 2.A.1.9) family. Expressed at low levels in roots.

The protein localises to the membrane. Functionally, high-affinity transporter for external inorganic phosphate. In Oryza sativa subsp. japonica (Rice), this protein is Probable inorganic phosphate transporter 1-9 (PHT1-9).